Here is a 365-residue protein sequence, read N- to C-terminus: Dual-specificity RNA methyltransferase RlmN (365 aa).

Glutamate 91 (proton acceptor) is an active-site residue. One can recognise a Radical SAM core domain in the interval 97-337; that stretch reads ETSRGTLCIS…TTVRKTRGDD (241 aa). A disulfide bridge links cysteine 104 with cysteine 342. The [4Fe-4S] cluster site is built by cysteine 111, cysteine 115, and cysteine 118. S-adenosyl-L-methionine contacts are provided by residues 168-169, serine 200, 222-224, and asparagine 299; these read GE and SLH. Cysteine 342 functions as the S-methylcysteine intermediate in the catalytic mechanism.

It belongs to the radical SAM superfamily. RlmN family. [4Fe-4S] cluster serves as cofactor.

The protein resides in the cytoplasm. The catalysed reaction is adenosine(2503) in 23S rRNA + 2 reduced [2Fe-2S]-[ferredoxin] + 2 S-adenosyl-L-methionine = 2-methyladenosine(2503) in 23S rRNA + 5'-deoxyadenosine + L-methionine + 2 oxidized [2Fe-2S]-[ferredoxin] + S-adenosyl-L-homocysteine. The enzyme catalyses adenosine(37) in tRNA + 2 reduced [2Fe-2S]-[ferredoxin] + 2 S-adenosyl-L-methionine = 2-methyladenosine(37) in tRNA + 5'-deoxyadenosine + L-methionine + 2 oxidized [2Fe-2S]-[ferredoxin] + S-adenosyl-L-homocysteine. Functionally, specifically methylates position 2 of adenine 2503 in 23S rRNA and position 2 of adenine 37 in tRNAs. m2A2503 modification seems to play a crucial role in the proofreading step occurring at the peptidyl transferase center and thus would serve to optimize ribosomal fidelity. In Nitrosospira multiformis (strain ATCC 25196 / NCIMB 11849 / C 71), this protein is Dual-specificity RNA methyltransferase RlmN.